The chain runs to 295 residues: MSIATGDFRSKVTSSTLLDKKSKHDPITCLTAYDYSTARLVDEAGIDMILVGDSLAQTMLGYENTLPVTMDEMLHHTRAVRRAVRHAFLIADMPYASYHVGGRESVRNAARFIKEGGAEAVKIEGGENRAALIDRLLDAEVPVVGHIGLTPQSVHRMGGYKVQGKTIRDIEQLMRDATALDRAGVVALVLEGIPREVAAMITAEVETPTIGIGAGPDCDGQVLVFHDILNLTFAPPAKFVRRYADAAELITGAVKAFRDDVKTGSYPSDDESYHLPKEAQATLEMVQNRKHAMRK.

Mg(2+) contacts are provided by D53 and D92. 3-methyl-2-oxobutanoate is bound by residues 53-54, D92, and K122; that span reads DS. E124 is a Mg(2+) binding site. Catalysis depends on E191, which acts as the Proton acceptor.

This sequence belongs to the PanB family. As to quaternary structure, homodecamer; pentamer of dimers. Requires Mg(2+) as cofactor.

It is found in the cytoplasm. The catalysed reaction is 3-methyl-2-oxobutanoate + (6R)-5,10-methylene-5,6,7,8-tetrahydrofolate + H2O = 2-dehydropantoate + (6S)-5,6,7,8-tetrahydrofolate. Its pathway is cofactor biosynthesis; (R)-pantothenate biosynthesis; (R)-pantoate from 3-methyl-2-oxobutanoate: step 1/2. Its function is as follows. Catalyzes the reversible reaction in which hydroxymethyl group from 5,10-methylenetetrahydrofolate is transferred onto alpha-ketoisovalerate to form ketopantoate. The polypeptide is 3-methyl-2-oxobutanoate hydroxymethyltransferase (Koribacter versatilis (strain Ellin345)).